A 202-amino-acid chain; its full sequence is ATP-dependent Clp protease proteolytic subunit (202 aa).

Ser-106 functions as the Nucleophile in the catalytic mechanism. Residue His-131 is part of the active site.

This sequence belongs to the peptidase S14 family. As to quaternary structure, fourteen ClpP subunits assemble into 2 heptameric rings which stack back to back to give a disk-like structure with a central cavity, resembling the structure of eukaryotic proteasomes.

The protein resides in the cytoplasm. It carries out the reaction Hydrolysis of proteins to small peptides in the presence of ATP and magnesium. alpha-casein is the usual test substrate. In the absence of ATP, only oligopeptides shorter than five residues are hydrolyzed (such as succinyl-Leu-Tyr-|-NHMec, and Leu-Tyr-Leu-|-Tyr-Trp, in which cleavage of the -Tyr-|-Leu- and -Tyr-|-Trp bonds also occurs).. Cleaves peptides in various proteins in a process that requires ATP hydrolysis. Has a chymotrypsin-like activity. Plays a major role in the degradation of misfolded proteins. This is ATP-dependent Clp protease proteolytic subunit from Shewanella sp. (strain W3-18-1).